We begin with the raw amino-acid sequence, 277 residues long: Undecaprenyl-diphosphatase (277 aa).

Transmembrane regions (helical) follow at residues 19–39, 44–64, 89–109, 122–142, 154–174, 195–215, 224–244, and 257–277; these read FLPV…PFYG, FDDL…LFLY, FHFL…GFIA, LLEI…VAEW, IGFK…IPGM, AEFS…YKLI, NTIP…TLVI, and SVFG…TKLI.

The protein belongs to the UppP family.

The protein resides in the cell inner membrane. The catalysed reaction is di-trans,octa-cis-undecaprenyl diphosphate + H2O = di-trans,octa-cis-undecaprenyl phosphate + phosphate + H(+). In terms of biological role, catalyzes the dephosphorylation of undecaprenyl diphosphate (UPP). Confers resistance to bacitracin. The chain is Undecaprenyl-diphosphatase from Leptospira interrogans serogroup Icterohaemorrhagiae serovar copenhageni (strain Fiocruz L1-130).